The primary structure comprises 448 residues: Probable glycine dehydrogenase (decarboxylating) subunit 1 (448 aa).

This sequence belongs to the GcvP family. N-terminal subunit subfamily. In terms of assembly, the glycine cleavage system is composed of four proteins: P, T, L and H. In this organism, the P 'protein' is a heterodimer of two subunits.

The enzyme catalyses N(6)-[(R)-lipoyl]-L-lysyl-[glycine-cleavage complex H protein] + glycine + H(+) = N(6)-[(R)-S(8)-aminomethyldihydrolipoyl]-L-lysyl-[glycine-cleavage complex H protein] + CO2. Its function is as follows. The glycine cleavage system catalyzes the degradation of glycine. The P protein binds the alpha-amino group of glycine through its pyridoxal phosphate cofactor; CO(2) is released and the remaining methylamine moiety is then transferred to the lipoamide cofactor of the H protein. The polypeptide is Probable glycine dehydrogenase (decarboxylating) subunit 1 (Bacillus pumilus (strain SAFR-032)).